We begin with the raw amino-acid sequence, 337 residues long: Anthraniloyl-CoA anthraniloyltransferase (337 aa).

Anthraniloyl-CoA is bound by residues T29 and F33. C113 functions as the Acyl-thioester intermediate in the catalytic mechanism. Anthraniloyl-CoA is bound by residues 154–155 (RN), 221–224 (MRGR), and H258.

It belongs to the thiolase-like superfamily. FabH family. In terms of assembly, homodimer.

It is found in the cytoplasm. The enzyme catalyses anthraniloyl-CoA + malonyl-CoA + H(+) = (2-aminobenzoyl)acetyl-CoA + CO2 + CoA. Functionally, required for the biosynthesis of a number of signaling molecules, such as the quinolone signal 2-heptyl-3-hydroxy-4(1H)-quinolone (PQS), 2-heptyl-4-hydroxyquinoline (HHQ) and 2,4-dihydroxyquinoline (DHQ). These molecules are required for normal biofilm formation. Catalyzes the transfer of the anthraniloyl moiety from anthraniloyl-CoA to malonyl-CoA to form 2-aminobenzoylacetyl-CoA. The first step of the reaction is the formation of a covalent anthraniloyl-PqsD intermediate. Next, the short-lived intermediate 3-(2-aminophenyl)-3-oxopropanoyl-CoA is formed. An intramolecular rearrangement of this intermediate can give rise to 2,4-dihydroxyquinoline (DHQ). The chain is Anthraniloyl-CoA anthraniloyltransferase (pqsD) from Pseudomonas aeruginosa (strain ATCC 15692 / DSM 22644 / CIP 104116 / JCM 14847 / LMG 12228 / 1C / PRS 101 / PAO1).